The following is a 299-amino-acid chain: Palmitoyltransferase ZDHHC3 (299 aa).

Residues 1-47 (MMLIPTHHFRNIERKPEYLQPEKCVPPPYPGPVGTMWFIRDGCGIAC) lie on the Cytoplasmic side of the membrane. Residue Y18 is modified to Phosphotyrosine. Residues 48–68 (AIVTWFLVLYAEFVVLFVMLI) form a helical membrane-spanning segment. Over 69-72 (PSRD) the chain is Extracellular. Residues 73–93 (YVYSIINGIVFNLLAFLALAS) form a helical membrane-spanning segment. Residues 94–171 (HCRAMLTDPG…NCVGENNQKY (78 aa)) are Cytoplasmic-facing. In terms of domain architecture, DHHC spans 127-177 (YKCPKCCSIKPDRAHHCSVCKRCIRKMDHHCPWVNNCVGENNQKYFVLFTM). C146 is lipidated: S-palmitoyl cysteine. The S-palmitoyl cysteine intermediate role is filled by C157. Residues 172 to 192 (FVLFTMYIALISLHALIMVGF) form a helical membrane-spanning segment. At 193–214 (HFLHCFEEDWTKCSSFSPPTTV) the chain is on the extracellular side. A helical membrane pass occupies residues 215–235 (ILLILLCFEGLLFLIFTSVMF). Residues 236–299 (GTQVHSICTD…GKADPYQYVV (64 aa)) lie on the Cytoplasmic side of the membrane.

Belongs to the DHHC palmitoyltransferase family. As to quaternary structure, monomer. Homooligomers. The monomeric form has a higher catalytic activity. Forms heterooligomers with ZDHHC7. Interacts with TNFRSF10A. In terms of processing, autopalmitoylated. Post-translationally, phosphorylation by FGFR1 and SRC probably regulates the palmitoyltransferase activity. As to expression, widely expressed with significant expression in heart, lung, liver, skeletal muscle, kidney, testis, thymus, small intestine and leukocyte.

It localises to the golgi apparatus membrane. It carries out the reaction L-cysteinyl-[protein] + hexadecanoyl-CoA = S-hexadecanoyl-L-cysteinyl-[protein] + CoA. The catalysed reaction is L-cysteinyl-[protein] + tetradecanoyl-CoA = S-tetradecanoyl-L-cysteinyl-[protein] + CoA. It catalyses the reaction L-cysteinyl-[protein] + octadecanoyl-CoA = S-octadecanoyl-L-cysteinyl-[protein] + CoA. Golgi-localized palmitoyltransferase that catalyzes the addition of palmitate onto various protein substrates. Has no stringent fatty acid selectivity and in addition to palmitate can also transfer onto target proteins myristate from tetradecanoyl-CoA and stearate from octadecanoyl-CoA. Plays an important role in G protein-coupled receptor signaling pathways involving GNAQ and potentially other heterotrimeric G proteins by regulating their dynamic association with the plasma membrane. Palmitoylates ITGA6 and ITGB4, thereby regulating the alpha-6/beta-4 integrin localization, expression and function in cell adhesion to laminin. Plays a role in the TRAIL-activated apoptotic signaling pathway most probably through the palmitoylation and localization to the plasma membrane of TNFRSF10A. In the brain, by palmitoylating the gamma subunit GABRG2 of GABA(A) receptors and regulating their postsynaptic accumulation, plays a role in synaptic GABAergic inhibitory function and GABAergic innervation. Palmitoylates the neuronal protein GAP43 which is also involved in the formation of GABAergic synapses. Palmitoylates NCDN thereby regulating its association with endosome membranes. Probably palmitoylates PRCD and is involved in its proper localization within the photoreceptor. Could mediate the palmitoylation of NCAM1 and regulate neurite outgrowth. Could palmitoylate DNAJC5 and regulate its localization to Golgi membranes. Also constitutively palmitoylates DLG4. May also palmitoylate SNAP25. Could palmitoylate the glutamate receptors GRIA1 and GRIA2 but this has not been confirmed in vivo. Could also palmitoylate the D(2) dopamine receptor DRD2. May also palmitoylate LAMTOR1, promoting its localization to lysosomal membranes. Palmitoylates the Toll-like receptor 9/TLR9 in the Golgi and thereby regulates TLR9 trafficking to endosomes. May palmitoylate CALHM1 and CALHM3 subunits of gustatory voltage-gated ion channels and modulate channel gating and kinetics. Functionally, may also function as a calcium transporter. The protein is Palmitoyltransferase ZDHHC3 of Homo sapiens (Human).